The sequence spans 145 residues: D-aminoacyl-tRNA deacylase (145 aa).

Positions 137 to 138 (GP) match the Gly-cisPro motif, important for rejection of L-amino acids motif.

Belongs to the DTD family. Homodimer.

The protein localises to the cytoplasm. It catalyses the reaction glycyl-tRNA(Ala) + H2O = tRNA(Ala) + glycine + H(+). The catalysed reaction is a D-aminoacyl-tRNA + H2O = a tRNA + a D-alpha-amino acid + H(+). In terms of biological role, an aminoacyl-tRNA editing enzyme that deacylates mischarged D-aminoacyl-tRNAs. Also deacylates mischarged glycyl-tRNA(Ala), protecting cells against glycine mischarging by AlaRS. Acts via tRNA-based rather than protein-based catalysis; rejects L-amino acids rather than detecting D-amino acids in the active site. By recycling D-aminoacyl-tRNA to D-amino acids and free tRNA molecules, this enzyme counteracts the toxicity associated with the formation of D-aminoacyl-tRNA entities in vivo and helps enforce protein L-homochirality. The protein is D-aminoacyl-tRNA deacylase of Francisella tularensis subsp. holarctica (strain FTNF002-00 / FTA).